The sequence spans 614 residues: NADH-quinone oxidoreductase subunit L (614 aa).

The next 15 membrane-spanning stretches (helical) occupy residues 1–21 (MSII…LSTI), 33–53 (IGIF…VSIL), 79–99 (FFLD…GLLI), 136–156 (FLFM…LIGF), 168–188 (FKAF…MFLI), 207–227 (LNVE…LGVI), 247–267 (TPVS…YLIA), 271–291 (FLFL…TLTI), 327–347 (AWSA…LLFL), 372–392 (LPFL…FPLI), 410–430 (GCID…IYTF), 455–475 (IPLF…SPPL), 492–512 (FEII…YIWI), 533–553 (FFLK…YFYL), and 593–613 (YVAS…FFYF).

The protein belongs to the complex I subunit 5 family. In terms of assembly, composed of 13 different subunits. Subunits NuoA, H, J, K, L, M, N constitute the membrane sector of the complex.

It localises to the cell membrane. The enzyme catalyses a quinone + NADH + 5 H(+)(in) = a quinol + NAD(+) + 4 H(+)(out). NDH-1 shuttles electrons from NADH, via FMN and iron-sulfur (Fe-S) centers, to quinones in the respiratory chain. Couples the redox reaction to proton translocation (for every two electrons transferred, four hydrogen ions are translocated across the cytoplasmic membrane), and thus conserves the redox energy in a proton gradient. This is NADH-quinone oxidoreductase subunit L (nuoL) from Buchnera aphidicola subsp. Acyrthosiphon pisum (strain APS) (Acyrthosiphon pisum symbiotic bacterium).